A 283-amino-acid polypeptide reads, in one-letter code: Nucleotide-binding protein ACIAD3059 (283 aa).

An ATP-binding site is contributed by 9–16 (GQSGSGKS). 59–62 (DVRS) serves as a coordination point for GTP.

Belongs to the RapZ-like family.

Displays ATPase and GTPase activities. The polypeptide is Nucleotide-binding protein ACIAD3059 (Acinetobacter baylyi (strain ATCC 33305 / BD413 / ADP1)).